Consider the following 599-residue polypeptide: Sulfite reductase [NADPH] flavoprotein alpha-component (599 aa).

Positions 64–202 constitute a Flavodoxin-like domain; sequence ITIISASQTG…AASEWRARVV (139 aa). Residues 70 to 75, 117 to 120, and 153 to 162 contribute to the FMN site; these read SQTGNA, STQG, and LGDSSYEFFC. One can recognise an FAD-binding FR-type domain in the interval 234–448; that stretch reads DAPLVASLSV…IEHNDNFRLP (215 aa). FAD-binding positions include threonine 322, alanine 356, 386–389, 404–406, tyrosine 410, and 419–422; these read RLYS, TVG, and GGAS. NADP(+) contacts are provided by residues 519–520, 525–529, and aspartate 561; these read SR and KVYVQ. Residue tyrosine 599 participates in FAD binding.

Belongs to the NADPH-dependent sulphite reductase flavoprotein subunit CysJ family. This sequence in the N-terminal section; belongs to the flavodoxin family. The protein in the C-terminal section; belongs to the flavoprotein pyridine nucleotide cytochrome reductase family. As to quaternary structure, alpha(8)-beta(8). The alpha component is a flavoprotein, the beta component is a hemoprotein. Requires FAD as cofactor. The cofactor is FMN.

It carries out the reaction hydrogen sulfide + 3 NADP(+) + 3 H2O = sulfite + 3 NADPH + 4 H(+). The protein operates within sulfur metabolism; hydrogen sulfide biosynthesis; hydrogen sulfide from sulfite (NADPH route): step 1/1. Its function is as follows. Component of the sulfite reductase complex that catalyzes the 6-electron reduction of sulfite to sulfide. This is one of several activities required for the biosynthesis of L-cysteine from sulfate. The flavoprotein component catalyzes the electron flow from NADPH -&gt; FAD -&gt; FMN to the hemoprotein component. In Escherichia coli (strain K12), this protein is Sulfite reductase [NADPH] flavoprotein alpha-component.